We begin with the raw amino-acid sequence, 168 residues long: Crossover junction endodeoxyribonuclease RuvC (168 aa).

Catalysis depends on residues Asp-9, Glu-70, and Asp-145. Mg(2+)-binding residues include Asp-9, Glu-70, and Asp-145.

This sequence belongs to the RuvC family. Homodimer which binds Holliday junction (HJ) DNA. The HJ becomes 2-fold symmetrical on binding to RuvC with unstacked arms; it has a different conformation from HJ DNA in complex with RuvA. In the full resolvosome a probable DNA-RuvA(4)-RuvB(12)-RuvC(2) complex forms which resolves the HJ. Mg(2+) is required as a cofactor.

It localises to the cytoplasm. The catalysed reaction is Endonucleolytic cleavage at a junction such as a reciprocal single-stranded crossover between two homologous DNA duplexes (Holliday junction).. The RuvA-RuvB-RuvC complex processes Holliday junction (HJ) DNA during genetic recombination and DNA repair. Endonuclease that resolves HJ intermediates. Cleaves cruciform DNA by making single-stranded nicks across the HJ at symmetrical positions within the homologous arms, yielding a 5'-phosphate and a 3'-hydroxyl group; requires a central core of homology in the junction. The consensus cleavage sequence is 5'-(A/T)TT(C/G)-3'. Cleavage occurs on the 3'-side of the TT dinucleotide at the point of strand exchange. HJ branch migration catalyzed by RuvA-RuvB allows RuvC to scan DNA until it finds its consensus sequence, where it cleaves and resolves the cruciform DNA. This Chlamydia felis (strain Fe/C-56) (Chlamydophila felis) protein is Crossover junction endodeoxyribonuclease RuvC.